The following is a 232-amino-acid chain: Small heat shock protein, chloroplastic (232 aa).

Positions 1-25 (MAQSVSLSTIASPILSQKPGSSVKS) are enriched in polar residues. Disordered regions lie at residues 1–35 (MAQSVSLSTIASPILSQKPGSSVKSTPPCMASFPL) and 48–81 (RAQAGGDGDNKDNSVEVHRVNKDDQGTAVERKPR). Residues 1 to 46 (MAQSVSLSTIASPILSQKPGSSVKSTPPCMASFPLRRQLPRLGLRN) constitute a chloroplast transit peptide. Over residues 55–78 (GDNKDNSVEVHRVNKDDQGTAVER) the composition is skewed to basic and acidic residues. In terms of domain architecture, sHSP spans 124–232 (IGGGEIRVPW…ERTVIDVQIQ (109 aa)).

Belongs to the small heat shock protein (HSP20) family.

It is found in the plastid. The protein resides in the chloroplast. This Pisum sativum (Garden pea) protein is Small heat shock protein, chloroplastic (HSP21).